We begin with the raw amino-acid sequence, 37 residues long: Large ribosomal subunit protein bL36 (37 aa).

It belongs to the bacterial ribosomal protein bL36 family.

The polypeptide is Large ribosomal subunit protein bL36 (Beutenbergia cavernae (strain ATCC BAA-8 / DSM 12333 / CCUG 43141 / JCM 11478 / NBRC 16432 / NCIMB 13614 / HKI 0122)).